A 283-amino-acid chain; its full sequence is Elongation factor Ts (283 aa).

The tract at residues 80–83 is involved in Mg(2+) ion dislocation from EF-Tu; sequence TDFV.

This sequence belongs to the EF-Ts family.

The protein localises to the cytoplasm. Associates with the EF-Tu.GDP complex and induces the exchange of GDP to GTP. It remains bound to the aminoacyl-tRNA.EF-Tu.GTP complex up to the GTP hydrolysis stage on the ribosome. This is Elongation factor Ts from Actinobacillus succinogenes (strain ATCC 55618 / DSM 22257 / CCUG 43843 / 130Z).